Reading from the N-terminus, the 151-residue chain is Large ribosomal subunit protein bL9 (151 aa).

The protein belongs to the bacterial ribosomal protein bL9 family.

Its function is as follows. Binds to the 23S rRNA. This chain is Large ribosomal subunit protein bL9, found in Prochlorococcus marinus (strain MIT 9515).